The following is a 532-amino-acid chain: Methionine--tRNA ligase (532 aa).

Positions Y16–S26 match the 'HIGH' region motif. Zn(2+) contacts are provided by C131, C134, C149, and H152. Residues K305–S309 carry the 'KMSKS' region motif. K308 contributes to the ATP binding site.

It belongs to the class-I aminoacyl-tRNA synthetase family. MetG type 2A subfamily. As to quaternary structure, monomer. Requires Zn(2+) as cofactor.

Its subcellular location is the cytoplasm. It carries out the reaction tRNA(Met) + L-methionine + ATP = L-methionyl-tRNA(Met) + AMP + diphosphate. Is required not only for elongation of protein synthesis but also for the initiation of all mRNA translation through initiator tRNA(fMet) aminoacylation. The sequence is that of Methionine--tRNA ligase (metG) from Synechocystis sp. (strain ATCC 27184 / PCC 6803 / Kazusa).